Reading from the N-terminus, the 293-residue chain is Pyridoxal 5'-phosphate synthase subunit PdxS (293 aa).

Position 23 (Asp-23) interacts with D-ribose 5-phosphate. The active-site Schiff-base intermediate with D-ribose 5-phosphate is Lys-80. D-ribose 5-phosphate is bound at residue Gly-152. Arg-164 provides a ligand contact to D-glyceraldehyde 3-phosphate. D-ribose 5-phosphate contacts are provided by residues Gly-213 and 234-235; that span reads GS.

It belongs to the PdxS/SNZ family. In terms of assembly, in the presence of PdxT, forms a dodecamer of heterodimers.

It carries out the reaction aldehydo-D-ribose 5-phosphate + D-glyceraldehyde 3-phosphate + L-glutamine = pyridoxal 5'-phosphate + L-glutamate + phosphate + 3 H2O + H(+). The protein operates within cofactor biosynthesis; pyridoxal 5'-phosphate biosynthesis. In terms of biological role, catalyzes the formation of pyridoxal 5'-phosphate from ribose 5-phosphate (RBP), glyceraldehyde 3-phosphate (G3P) and ammonia. The ammonia is provided by the PdxT subunit. Can also use ribulose 5-phosphate and dihydroxyacetone phosphate as substrates, resulting from enzyme-catalyzed isomerization of RBP and G3P, respectively. In Dehalococcoides mccartyi (strain ATCC BAA-2100 / JCM 16839 / KCTC 5957 / BAV1), this protein is Pyridoxal 5'-phosphate synthase subunit PdxS.